Here is a 316-residue protein sequence, read N- to C-terminus: Ribosomal protein L11 methyltransferase (316 aa).

S-adenosyl-L-methionine-binding residues include threonine 157, glycine 178, aspartate 200, and asparagine 243.

This sequence belongs to the methyltransferase superfamily. PrmA family.

It localises to the cytoplasm. The enzyme catalyses L-lysyl-[protein] + 3 S-adenosyl-L-methionine = N(6),N(6),N(6)-trimethyl-L-lysyl-[protein] + 3 S-adenosyl-L-homocysteine + 3 H(+). Its function is as follows. Methylates ribosomal protein L11. This is Ribosomal protein L11 methyltransferase from Streptococcus pneumoniae (strain Hungary19A-6).